Reading from the N-terminus, the 423-residue chain is Enolase (423 aa).

Gln-163 provides a ligand contact to (2R)-2-phosphoglycerate. The active-site Proton donor is the Glu-205. Mg(2+) is bound by residues Asp-242, Glu-285, and Asp-312. (2R)-2-phosphoglycerate is bound by residues Lys-337, Arg-366, Ser-367, and Lys-388. The active-site Proton acceptor is Lys-337.

This sequence belongs to the enolase family. The cofactor is Mg(2+).

It is found in the cytoplasm. It localises to the secreted. The protein localises to the cell surface. It carries out the reaction (2R)-2-phosphoglycerate = phosphoenolpyruvate + H2O. Its pathway is carbohydrate degradation; glycolysis; pyruvate from D-glyceraldehyde 3-phosphate: step 4/5. In terms of biological role, catalyzes the reversible conversion of 2-phosphoglycerate (2-PG) into phosphoenolpyruvate (PEP). It is essential for the degradation of carbohydrates via glycolysis. This is Enolase from Desulforapulum autotrophicum (strain ATCC 43914 / DSM 3382 / VKM B-1955 / HRM2) (Desulfobacterium autotrophicum).